The chain runs to 2948 residues: Transforming acidic coiled-coil-containing protein 2 (2948 aa).

The segment covering 1–30 has biased composition (polar residues); it reads MGNENSTSDNQRTLSAQTPRSAQPPGNSQN. Disordered stretches follow at residues 1-304, 314-333, 392-453, 465-785, 825-964, 985-1050, 1062-1154, 1243-1274, 1296-1400, 1427-1463, 1493-1661, 1675-1705, 1741-1878, 1907-2035, and 2052-2460; these read MGNE…TDDL, RSNS…QESC, AAGG…MPVS, LVGL…PQGE, SSEK…VSPP, CTGQ…QPDS, ALAP…GEAT, AAQR…VGEP, QPGA…EQIA, PGEK…VTLL, ASDK…GERR, LGNQ…AGEA, VLPG…ESPT, HAGL…SSGT, and LEPR…ETPP. Residues 174–184 show a composition bias toward basic and acidic residues; that stretch reads GRERQPKEEGQ. Ser197, Ser201, and Ser269 each carry phosphoserine. A Phosphothreonine modification is found at Val325. Ser493 is subject to Phosphoserine. The span at 496–507 shows a compositional bias: basic and acidic residues; the sequence is ERGEHLNTEQSH. Ser561, Ser571, and Ser575 each carry phosphoserine. A compositionally biased stretch (basic and acidic residues) spans 604–629; it reads SKRDPEVGKDELSKPSSDAESRDHPS. A Phosphoserine modification is found at Ser758. Over residues 911 to 926 the composition is skewed to low complexity; sequence SDTPTSSPTDMVWESS. Ser962 carries the phosphoserine modification. Residues 985-996 show a composition bias toward polar residues; the sequence is CTGQGPNKSQQA. Ser1025 is subject to Phosphoserine. Residues Ser1267 and Ser1313 each carry the phosphoserine modification. Residues 1348–1357 show a composition bias toward low complexity; sequence ATAPGAGAKA. Polar residues predominate over residues 1383–1400; the sequence is DPKQGTSGGVDTSSEQIA. Residue Ser1562 is modified to Phosphoserine. 2 stretches are compositionally biased toward basic and acidic residues: residues 1801–1823 and 1834–1854; these read DETH…RESP and PKKD…RGAE. The segment covering 1862-1873 has biased composition (low complexity); that stretch reads ADDIIQPAAPAD. Over residues 1939 to 1948 the composition is skewed to basic and acidic residues; it reads PAKDLSRSSD. Pro residues predominate over residues 1963-1976; the sequence is KAPPAPPPPPPEVI. Residue Ser2072 is modified to Phosphoserine. Residues 2074 to 2102 show a composition bias toward polar residues; it reads DSVPISKSTLSRSLSLQASDFDGASSSGN. Over residues 2114–2124 the composition is skewed to low complexity; it reads STGSSSASSTL. Over residues 2125–2141 the composition is skewed to basic residues; the sequence is KRTKKPRPPSLKKKQTT. Ser2161 and Ser2226 each carry phosphoserine. Thr2246 carries the post-translational modification Phosphothreonine. The residue at position 2256 (Ser2256) is a Phosphoserine. The span at 2265 to 2275 shows a compositional bias: basic and acidic residues; it reads LEFDYSEDKSS. The segment covering 2288–2305 has biased composition (basic residues); sequence KIGKKPVAKMPLRRPKMK. Positions 2315–2403 constitute an SPAZ domain; that stretch reads PASPPRSPAE…SPASFEIPAS (89 aa). Phosphoserine is present on residues Ser2317, Ser2321, Ser2359, Ser2389, Ser2392, Ser2394, and Ser2403. The span at 2348–2368 shows a compositional bias: polar residues; it reads NPFSSTSKMQESPKLPQQSYN. The span at 2382 to 2395 shows a compositional bias: low complexity; the sequence is KTSSKTPSSPSKSP. Residues Thr2430, Thr2451, Thr2455, and Thr2458 each carry the phosphothreonine modification. Ser2512 and Ser2534 each carry phosphoserine. Residue Thr2553 is modified to Phosphothreonine. The segment at 2555 to 2577 is disordered; that stretch reads QESPVKSSPVRMSESPTPCSGSS. A phosphoserine mark is found at Ser2557 and Ser2569. Residues 2568-2577 are compositionally biased toward polar residues; it reads ESPTPCSGSS. Position 2625 is a phosphothreonine (Thr2625). Coiled-coil stretches lie at residues 2675 to 2703 and 2746 to 2947; these read AQKL…LASR and DLDS…KMGK.

The protein belongs to the TACC family. In terms of assembly, interacts with CCDC100/CEP120. Interacts with microtubules. Interacts with YEATS4, GCN5L2 and PCAF. In terms of processing, phosphorylated by TTK; which is required for localization in centrosome. In terms of tissue distribution, strongly expressed in heart, skeletal muscle, brain, prostate, thyroid and trachea.

The protein localises to the cytoplasm. It localises to the nucleus. The protein resides in the cytoskeleton. Its subcellular location is the microtubule organizing center. It is found in the centrosome. Functionally, plays a role in the microtubule-dependent coupling of the nucleus and the centrosome. Involved in the processes that regulate centrosome-mediated interkinetic nuclear migration (INM) of neural progenitors. May play a role in organizing centrosomal microtubules. May act as a tumor suppressor protein. May represent a tumor progression marker. This chain is Transforming acidic coiled-coil-containing protein 2 (TACC2), found in Homo sapiens (Human).